The following is a 115-amino-acid chain: Nucleoid-associated protein NATL1_00191 (115 aa).

Residues 89-115 form a disordered region; it reads STSTMKERMEDLTGGFKLNLPGMGEES.

It belongs to the YbaB/EbfC family. Homodimer.

The protein localises to the cytoplasm. Its subcellular location is the nucleoid. Its function is as follows. Binds to DNA and alters its conformation. May be involved in regulation of gene expression, nucleoid organization and DNA protection. The chain is Nucleoid-associated protein NATL1_00191 from Prochlorococcus marinus (strain NATL1A).